The sequence spans 582 residues: Aspartate--tRNA ligase (582 aa).

Residue glutamate 174 coordinates L-aspartate. The segment at 198–201 (QITK) is aspartate. L-aspartate is bound at residue arginine 220. ATP contacts are provided by residues 220–222 (RDE) and glutamine 229. An L-aspartate-binding site is contributed by histidine 443. Glutamate 477 serves as a coordination point for ATP. Arginine 484 serves as a coordination point for L-aspartate. 529-532 (GLDR) serves as a coordination point for ATP.

The protein belongs to the class-II aminoacyl-tRNA synthetase family. Type 1 subfamily. As to quaternary structure, homodimer.

The protein localises to the cytoplasm. The enzyme catalyses tRNA(Asp) + L-aspartate + ATP = L-aspartyl-tRNA(Asp) + AMP + diphosphate. Functionally, catalyzes the attachment of L-aspartate to tRNA(Asp) in a two-step reaction: L-aspartate is first activated by ATP to form Asp-AMP and then transferred to the acceptor end of tRNA(Asp). This is Aspartate--tRNA ligase from Streptococcus pyogenes serotype M5 (strain Manfredo).